The sequence spans 463 residues: Cysteine--tRNA ligase (463 aa).

Residue C30 coordinates Zn(2+). The 'HIGH' region motif lies at M32–H42. Residues C214, H239, and E243 each coordinate Zn(2+). Positions K271–S275 match the 'KMSKS' region motif. K274 serves as a coordination point for ATP.

This sequence belongs to the class-I aminoacyl-tRNA synthetase family. Monomer. The cofactor is Zn(2+).

The protein localises to the cytoplasm. It carries out the reaction tRNA(Cys) + L-cysteine + ATP = L-cysteinyl-tRNA(Cys) + AMP + diphosphate. The protein is Cysteine--tRNA ligase of Ralstonia pickettii (strain 12J).